Consider the following 366-residue polypeptide: Major outer membrane protein (366 aa).

The first 21 residues, 1 to 21, serve as a signal peptide directing secretion; sequence MKKTLLATAIAGAMAASGAQA.

This sequence belongs to the Gram-negative porin family. Homotrimer.

It localises to the cell outer membrane. The chain is Major outer membrane protein from Halomonas elongata (strain ATCC 33173 / DSM 2581 / NBRC 15536 / NCIMB 2198 / 1H9).